A 132-amino-acid chain; its full sequence is Large-conductance mechanosensitive channel (132 aa).

A run of 2 helical transmembrane segments spans residues 14 to 34 (VIDL…VSSL) and 67 to 87 (GNFI…FMFV).

The protein belongs to the MscL family. In terms of assembly, homopentamer.

The protein localises to the cell membrane. In terms of biological role, channel that opens in response to stretch forces in the membrane lipid bilayer. May participate in the regulation of osmotic pressure changes within the cell. The chain is Large-conductance mechanosensitive channel from Bacillus anthracis (strain A0248).